The following is a 433-amino-acid chain: D-amino acid dehydrogenase (433 aa).

FAD is bound at residue 3–17 (VLVLGSGVIGTTSAY).

Belongs to the DadA oxidoreductase family. FAD serves as cofactor.

It carries out the reaction a D-alpha-amino acid + A + H2O = a 2-oxocarboxylate + AH2 + NH4(+). Functionally, oxidative deamination of D-amino acids. The chain is D-amino acid dehydrogenase from Pseudomonas syringae pv. tomato (strain ATCC BAA-871 / DC3000).